The primary structure comprises 574 residues: Calcium-dependent protein kinase 9 (574 aa).

A disordered region spans residues M1–D64. G2 carries N-myristoyl glycine lipidation. Over residues K28–T40 the composition is skewed to low complexity. The 259-residue stretch at Y101–L359 folds into the Protein kinase domain. Residues L107–T115 and K130 contribute to the ATP site. D225 (proton acceptor) is an active-site residue. Residues A365–I395 are autoinhibitory domain. EF-hand domains follow at residues E402–K437, L438–L473, S474–H509, and A510–W545. Ca(2+) is bound by residues D415, D417, N419, R421, E426, D451, D453, N455, Y457, E462, D487, D489, S491, Y493, E498, D523, D525, D527, R529, and E534.

This sequence belongs to the protein kinase superfamily. Ser/Thr protein kinase family. CDPK subfamily. As to expression, expressed in leaf blades and stems. Expressed at low levels in anthers and spikelets.

It localises to the membrane. It carries out the reaction L-seryl-[protein] + ATP = O-phospho-L-seryl-[protein] + ADP + H(+). It catalyses the reaction L-threonyl-[protein] + ATP = O-phospho-L-threonyl-[protein] + ADP + H(+). With respect to regulation, activated by calcium. Autophosphorylation may play an important role in the regulation of the kinase activity. Its function is as follows. May play a role in signal transduction pathways that involve calcium as a second messenger. Functions in signal transduction pathways that positively regulate responses to drought, osmotic, and dehydration stress. Regulates expression of stress-associated genes in response to drought. Involved in tolerance to drought stress by increasing proline and soluble sugars, and improving stomatal closure. Required for pollen maturation and spikelet fertility. In Oryza sativa subsp. japonica (Rice), this protein is Calcium-dependent protein kinase 9.